A 275-amino-acid chain; its full sequence is Undecaprenyl-diphosphatase (275 aa).

8 helical membrane-spanning segments follow: residues 2–22 (LDIFKAVILGIVEGITEFLPI), 43–63 (FTDMFNVVIQLGAIMAVVVLY), 83–103 (WVLWSKVLLAVIPSVIVGLPL), 111–131 (LMNWAVVSATLIIYGVLFIVI), 147–167 (TLPYTTALFIGCFQLLSLIPG), 186–206 (YVATEFSFFMAIPTMFGASLL), 221–241 (LQGAVLAVGVIVSFVVAYLSI), and 255–275 (AFGWYRIVLGVLVIGYFTLIH).

This sequence belongs to the UppP family.

The protein resides in the cell membrane. The catalysed reaction is di-trans,octa-cis-undecaprenyl diphosphate + H2O = di-trans,octa-cis-undecaprenyl phosphate + phosphate + H(+). In terms of biological role, catalyzes the dephosphorylation of undecaprenyl diphosphate (UPP). Confers resistance to bacitracin. The chain is Undecaprenyl-diphosphatase from Lactiplantibacillus plantarum (strain ATCC BAA-793 / NCIMB 8826 / WCFS1) (Lactobacillus plantarum).